Consider the following 712-residue polypeptide: Transcriptional regulator GZF3 (712 aa).

Positions 1-13 (MSMSDIQQRPQIP) are enriched in polar residues. Disordered regions lie at residues 1 to 20 (MSMS…TAAV), 27 to 135 (NVNT…GPVC), 173 to 280 (SLKT…HHHL), 377 to 533 (DVSS…GNNF), and 596 to 712 (LNNN…KVKI). 2 stretches are compositionally biased toward low complexity: residues 27-84 (NVNT…EQSS) and 107-131 (PKTG…ISMS). The GATA-type zinc-finger motif lies at 135 to 159 (CGNCQTQTTPLWRRDETGQVLCNAC). A compositionally biased stretch (low complexity) spans 186 to 199 (KQNGSNSQSSKSSG). Residues 213–223 (GKKSPKSKKKS) show a composition bias toward basic residues. Positions 246 to 261 (ATSNNTPTFKSTTSQS) are enriched in polar residues. Residues 268-280 (NHHHQHHNHHHHL) are compositionally biased toward basic residues. Residues 379–414 (SSINGSSTSLSSSSASSSIFSSVAPSTSSSSSLSNG) show a composition bias toward low complexity. 2 stretches are compositionally biased toward polar residues: residues 429 to 447 (SKIS…TPLQ) and 484 to 498 (QQSM…RSPI). Composition is skewed to low complexity over residues 499 to 532 (NGNQ…NGNN) and 596 to 616 (LNNN…QPQQ). The stretch at 545–598 (TRISELELVNDLYRTRIMELEAMEQAARLRENSMKKRLDEVMNLQINYQNLLNN) forms a coiled coil. Polar residues predominate over residues 631-667 (DQGSQSISPNVSITGSTTITSPNSRSKIISETTPTHH).

Its subcellular location is the nucleus. In terms of biological role, probable transcription factor involved in response to fluconazole, LiCl, and copper. This chain is Transcriptional regulator GZF3 (GZF3), found in Candida albicans (strain SC5314 / ATCC MYA-2876) (Yeast).